Reading from the N-terminus, the 435-residue chain is 3-ketoacyl-CoA thiolase (435 aa).

The active-site Acyl-thioester intermediate is the C98. Catalysis depends on proton acceptor residues H391 and C421.

It belongs to the thiolase-like superfamily. Thiolase family. In terms of assembly, heterotetramer of two alpha chains (FadJ) and two beta chains (FadI).

The protein localises to the cytoplasm. The enzyme catalyses an acyl-CoA + acetyl-CoA = a 3-oxoacyl-CoA + CoA. The protein operates within lipid metabolism; fatty acid beta-oxidation. Functionally, catalyzes the final step of fatty acid oxidation in which acetyl-CoA is released and the CoA ester of a fatty acid two carbons shorter is formed. This Colwellia psychrerythraea (strain 34H / ATCC BAA-681) (Vibrio psychroerythus) protein is 3-ketoacyl-CoA thiolase.